Reading from the N-terminus, the 662-residue chain is uncharacterized protein (662 aa).

The FAD site is built by serine 145, glutamate 164, tryptophan 173, aspartate 184, and tyrosine 190. The disordered stretch occupies residues 638 to 662 (SRLETSGVPREGVQRPGSRLRRRPS).

It belongs to the FAD-binding monooxygenase family. FAD serves as cofactor.

This is an uncharacterized protein from Sinorhizobium fredii (strain NBRC 101917 / NGR234).